The chain runs to 434 residues: MSTFQGEVTTLPPDKSISHRAALIGALAEGTTEISNFSGGYDNQSTLSVLRDAGISIRQEELSAGDGRIERRVVIESNGLWSFREPSVPLMCNNSGSTMRMMAGIMAAQPFRSELVGDASLMKRPMKRVADPLRQMGAEISLSDAGTAPVVIHGTKALKTIEYRLPVPSAQVKSLVAFAALHADGQSKIIEPIRSRDHTELMLGLATIDRPDGVREIIIDGRKPIAAKPFKVPADPSAACFMIALGLLGERSEIVLRNVCLNPTRVAYIDVLQEAGAGLGIENVRSEGGEPVGDIVVRSCSGLKPLRISDHGVVAGVIDEVPMLAVLSAFASGEFELHNAAELRTKESDRIDALVVNLQRLGFECEQYADGFVVKGRKTVASEEVEIECFDDHRIAMSFTIAAEAAGASLRLSDRDVAGVSFPNFFALIDSLRQ.

Residues Lys15, Ser16, and Arg20 each contribute to the 3-phosphoshikimate site. Lys15 serves as a coordination point for phosphoenolpyruvate. Gly96 and Arg124 together coordinate phosphoenolpyruvate. Residues Ser169, Gln171, Ser195, Asp319, and Lys346 each contribute to the 3-phosphoshikimate site. Gln171 is a binding site for phosphoenolpyruvate. Asp319 acts as the Proton acceptor in catalysis. Residues Arg350 and Arg394 each contribute to the phosphoenolpyruvate site.

The protein belongs to the EPSP synthase family. Monomer.

Its subcellular location is the cytoplasm. The enzyme catalyses 3-phosphoshikimate + phosphoenolpyruvate = 5-O-(1-carboxyvinyl)-3-phosphoshikimate + phosphate. The protein operates within metabolic intermediate biosynthesis; chorismate biosynthesis; chorismate from D-erythrose 4-phosphate and phosphoenolpyruvate: step 6/7. Functionally, catalyzes the transfer of the enolpyruvyl moiety of phosphoenolpyruvate (PEP) to the 5-hydroxyl of shikimate-3-phosphate (S3P) to produce enolpyruvyl shikimate-3-phosphate and inorganic phosphate. The polypeptide is 3-phosphoshikimate 1-carboxyvinyltransferase (Chlorobaculum tepidum (strain ATCC 49652 / DSM 12025 / NBRC 103806 / TLS) (Chlorobium tepidum)).